The sequence spans 424 residues: MALPTPSDSTLPAEARGRGRRRRLVWTPSQSEALRACFERNPYPGIATRERLAQAIGIPEPRVQIWFQNERSRQLRQHRRESRPWPGRRGPPEGRRKRTAVTGSQTALLLRAFEKDRFPGIAAREELARETGLPESRIQIWFQNRRARHPGQGGRAPAQAGGLCSAAPGGGHPAPSWVAFAHTGAWGTGLPAPHVPCAPGALPQGAFVSQAARAAPALQPSQAAPAEGVSQPAPARGDFAYAAPAPPDGALSHPQAPRWPPHPGKSREDRDPQRDGLPGPCAVAQPGPAQAGPQGQGVLAPPTSQGSPWWGWGRGPQVAGAAWEPQAGAAPPPQPAPPDASASARQGQMQGIPAPSQALQEPAPWSALPCGLLLDELLASPEFLQQAQPLLETEAPGELEASEEAASLEAPLSEEEYRALLEEL.

The segment covering 1 to 10 (MALPTPSDST) has biased composition (polar residues). Disordered regions lie at residues 1 to 24 (MALP…RRRL), 72 to 102 (SRQL…TAVT), 148 to 167 (RHPG…CSAA), 218 to 362 (LQPS…LQEP), and 388 to 414 (QPLL…PLSE). 2 DNA-binding regions (homeobox) span residues 19–78 (GRRR…LRQH) and 94–153 (GRRK…PGQG). The segment covering 265 to 274 (KSREDRDPQR) has biased composition (basic and acidic residues). 2 stretches are compositionally biased toward low complexity: residues 278 to 302 (PGPC…LAPP) and 319 to 329 (AGAAWEPQAGA).

The protein localises to the nucleus. Its function is as follows. May be involved in transcriptional regulation. This chain is Double homeobox protein 4-like protein 2 (DUX4L2), found in Homo sapiens (Human).